A 138-amino-acid chain; its full sequence is Ribosomal RNA large subunit methyltransferase H (138 aa).

S-adenosyl-L-methionine-binding positions include Leu57, Gly86, and 105-110; that span reads LSPLTF.

The protein belongs to the RNA methyltransferase RlmH family. In terms of assembly, homodimer.

It is found in the cytoplasm. The catalysed reaction is pseudouridine(1915) in 23S rRNA + S-adenosyl-L-methionine = N(3)-methylpseudouridine(1915) in 23S rRNA + S-adenosyl-L-homocysteine + H(+). In terms of biological role, specifically methylates the pseudouridine at position 1915 (m3Psi1915) in 23S rRNA. In Prochlorococcus marinus (strain MIT 9301), this protein is Ribosomal RNA large subunit methyltransferase H.